The following is a 263-amino-acid chain: HTH-type transcriptional repressor NanR (263 aa).

Residues 30-98 (KKLSEMVEEE…NGERARVSRP (69 aa)) form the HTH gntR-type domain. The segment at residues 58-77 (ERELMAFFNVGRPSVREALA) is a DNA-binding region (H-T-H motif).

Belongs to the NanR family.

Functionally, transcriptional repressor that controls expression of the genes required for the catabolism of sialic acids. The sequence is that of HTH-type transcriptional repressor NanR from Salmonella bongori (strain ATCC 43975 / DSM 13772 / NCTC 12419).